The following is an 831-amino-acid chain: SID1 transmembrane family member 1 (831 aa).

The signal sequence occupies residues 1–19 (MLDCPRLALLCALPWLLRA). At 20-308 (AVPGHRAEPL…SVKGSVYVKS (289 aa)) the chain is on the extracellular side. N-linked (GlcNAc...) asparagine glycans are attached at residues Asn-67, Asn-83, Asn-136, and Asn-281. The chain crosses the membrane as a helical span at residues 309–329 (SLFSVFVFLSFYLGCLLVVFV). The Cytoplasmic portion of the chain corresponds to 330–441 (HHMRFQRKPV…DRRIVSKKYK (112 aa)). The interval 354–408 (VSHPITASTPEGSNYGAIDESSSSPGRQMSSSDGGQPCHSDTDSSVEESDFDTMP) is disordered. Residues 374–385 (SSSSPGRQMSSS) show a composition bias toward low complexity. The segment covering 397–408 (SSVEESDFDTMP) has biased composition (acidic residues). The helical transmembrane segment at 442 to 462 (IYFWNIITIAVFYALPVMQLV) threads the bilayer. At 463–493 (ITYQTVVNVTGNQDICYYNFLCAHPLGVLSA) the chain is on the extracellular side. N-linked (GlcNAc...) asparagine glycosylation is present at Asn-470. Residues 494 to 514 (FNNILSNLGHVLLGFLFLLIV) traverse the membrane as a helical segment. The Cytoplasmic segment spans residues 515 to 540 (LRRDLLHRRALEAKDIFAMEYGIPKH). Residues 541–561 (FGLFYAMGIALMMEGVLSACY) traverse the membrane as a helical segment. The Extracellular portion of the chain corresponds to 562–571 (HVCPNYSNFQ). An N-linked (GlcNAc...) asparagine glycan is attached at Asn-566. A helical membrane pass occupies residues 572–589 (FDTSFMYMIAGLCMLKLY). The Cytoplasmic segment spans residues 590 to 599 (QTRHPDINAS). A helical membrane pass occupies residues 600-620 (AYSAYASFAVVITLTVLGVVF). Over 621–625 (GKNDV) the chain is Extracellular. A helical transmembrane segment spans residues 626-646 (WFWIIFSAIHVLASLALSTQI). Topologically, residues 647–687 (YYMGRFKIDVSDTDLGIFRRAAMVFYTDCIQQCSRPLYMDR) are cytoplasmic. Residues 688 to 708 (MVLLIVGNLVNWSFALFGLIY) form a helical membrane-spanning segment. Topologically, residues 709–714 (RPRDFA) are extracellular. The helical transmembrane segment at 715-735 (SYMLGIFICNLLLYLAFYIIM) threads the bilayer. Over 736–745 (KLRSSEKVLP) the chain is Cytoplasmic. The chain crosses the membrane as a helical span at residues 746-766 (LPVFCIVATAVVWAAALYFFF). Residues 767 to 795 (QNLSSWEGTPAESREKNRECVLLGFFDDH) are Extracellular-facing. The N-linked (GlcNAc...) asparagine glycan is linked to Asn-768. A helical transmembrane segment spans residues 796 to 816 (DIWHFLSATALFFSFLVLLTL). At 817-831 (DDDLDVVRRDQIPVF) the chain is on the cytoplasmic side.

This sequence belongs to the SID1 family.

It is found in the membrane. Functionally, in vitro binds long double-stranded RNA (dsRNA) (500 and 700 base pairs), but not dsRNA shorter than 300 bp. Not involved in RNA autophagy, a process in which RNA is directly imported into lysosomes in an ATP-dependent manner, and degraded. In Rattus norvegicus (Rat), this protein is SID1 transmembrane family member 1 (Sidt1).